A 142-amino-acid polypeptide reads, in one-letter code: Coactosin-like protein (142 aa).

Ala2 is subject to N-acetylalanine. The 129-residue stretch at 2-130 (ATKIDKEACR…EEDFIRSELK (129 aa)) folds into the ADF-H domain. The flexible and important for F-actin binding stretch occupies residues 66 to 75 (TGDAMSKRSK). Lys102 carries the post-translational modification N6-acetyllysine. Position 141 is a phosphoserine (Ser141).

Belongs to the actin-binding proteins ADF family. Coactosin subfamily. In terms of assembly, interacts with 5-lipoxygenase (ALOX5/5LO) in a calcium-independent manner. Binds to F-actin with a stoichiometry of 1:2.

The protein resides in the cytoplasm. It is found in the cytoskeleton. It localises to the nucleus. Binds to F-actin in a calcium-independent manner. Has no direct effect on actin depolymerization. Acts as a chaperone for ALOX5 (5LO), influencing both its stability and activity in leukotrienes synthesis. The protein is Coactosin-like protein (Cotl1) of Mus musculus (Mouse).